A 210-amino-acid polypeptide reads, in one-letter code: Thymidylate kinase (210 aa).

Residue 10–17 participates in ATP binding; the sequence is GPEGAGKS.

Belongs to the thymidylate kinase family.

It carries out the reaction dTMP + ATP = dTDP + ADP. Its function is as follows. Phosphorylation of dTMP to form dTDP in both de novo and salvage pathways of dTTP synthesis. In Pseudomonas putida (strain GB-1), this protein is Thymidylate kinase.